The following is a 204-amino-acid chain: Dual specificity protein phosphatase 18 (204 aa).

In terms of domain architecture, Tyrosine-protein phosphatase spans 19–160 (GLSQITKSLF…LIHYEFQLFG (142 aa)). The interval 95–141 (MKQGRTLLHCAAGVSRSAALCLAYLMKYHVMSLLDAHAWTKSRRPII) is sufficient for mitochondrial localization. The active-site Phosphocysteine intermediate is cysteine 104.

Belongs to the protein-tyrosine phosphatase family. Non-receptor class dual specificity subfamily.

Its subcellular location is the cytoplasm. It localises to the nucleus. The protein localises to the mitochondrion inner membrane. It catalyses the reaction O-phospho-L-tyrosyl-[protein] + H2O = L-tyrosyl-[protein] + phosphate. The enzyme catalyses O-phospho-L-seryl-[protein] + H2O = L-seryl-[protein] + phosphate. It carries out the reaction O-phospho-L-threonyl-[protein] + H2O = L-threonyl-[protein] + phosphate. Its function is as follows. Can dephosphorylate single and diphosphorylated synthetic MAPK peptides, with preference for the phosphotyrosine and diphosphorylated forms over phosphothreonine. In vitro, dephosphorylates p-nitrophenyl phosphate (pNPP). This is Dual specificity protein phosphatase 18 (Dusp18) from Rattus norvegicus (Rat).